We begin with the raw amino-acid sequence, 156 residues long: Probable cyclic pyranopterin monophosphate synthase (156 aa).

Substrate is bound by residues 74–76 (MCH) and 110–111 (ME). The active site involves Asp125.

It belongs to the MoaC family. In terms of assembly, homohexamer; trimer of dimers.

It carries out the reaction (8S)-3',8-cyclo-7,8-dihydroguanosine 5'-triphosphate = cyclic pyranopterin phosphate + diphosphate. The protein operates within cofactor biosynthesis; molybdopterin biosynthesis. Functionally, catalyzes the conversion of (8S)-3',8-cyclo-7,8-dihydroguanosine 5'-triphosphate to cyclic pyranopterin monophosphate (cPMP). The sequence is that of Probable cyclic pyranopterin monophosphate synthase from Methanospirillum hungatei JF-1 (strain ATCC 27890 / DSM 864 / NBRC 100397 / JF-1).